Here is a 651-residue protein sequence, read N- to C-terminus: Methionine--tRNA ligase (651 aa).

A 'HIGH' region motif is present at residues 10 to 20; sequence AYTNGPLHLGH. The Zn(2+) site is built by cysteine 142, cysteine 145, cysteine 154, and cysteine 157. The 'KMSKS' region signature appears at 320 to 324; that stretch reads KMSTS. An ATP-binding site is contributed by threonine 323. A tRNA-binding domain is found at 550–651; the sequence is YLEKIDLRVG…KDIKAGSKVR (102 aa).

Belongs to the class-I aminoacyl-tRNA synthetase family. MetG type 1 subfamily. As to quaternary structure, homodimer. The cofactor is Zn(2+).

The protein localises to the cytoplasm. The catalysed reaction is tRNA(Met) + L-methionine + ATP = L-methionyl-tRNA(Met) + AMP + diphosphate. Functionally, is required not only for elongation of protein synthesis but also for the initiation of all mRNA translation through initiator tRNA(fMet) aminoacylation. This Methanocaldococcus jannaschii (strain ATCC 43067 / DSM 2661 / JAL-1 / JCM 10045 / NBRC 100440) (Methanococcus jannaschii) protein is Methionine--tRNA ligase.